The chain runs to 101 residues: Small ribosomal subunit protein uS14 (101 aa).

Residues 1–23 are disordered; that stretch reads MAKKSSVEKNKRRRKMVAQQAPK.

It belongs to the universal ribosomal protein uS14 family. As to quaternary structure, part of the 30S ribosomal subunit. Contacts proteins S3 and S10.

Functionally, binds 16S rRNA, required for the assembly of 30S particles and may also be responsible for determining the conformation of the 16S rRNA at the A site. The chain is Small ribosomal subunit protein uS14 from Rhodospirillum centenum (strain ATCC 51521 / SW).